Here is a 419-residue protein sequence, read N- to C-terminus: Methyltransferase/ribosomally synthesized type I borosin cyclic peptide precursor gjuMa (419 aa).

Residues 1–255 (MATPIATTTN…AISTLYVPPR (255 aa)) are methyltransferase domain. Catalysis depends on residues R79, Y83, and Y105. S-adenosyl-L-methionine is bound by residues Y105, H107, V110, A137, Q179, G217, S248, and T249. The segment at 256 to 381 (DISPVDPTMA…GAVYALMSRP (126 aa)) is clasp domain. The segment at 382–404 (TGDIAREKELTNDEIANNHGAPY) is precursor leader. S408 is subject to N-methylserine. A409 bears the N-methylalanine mark. The residue at position 410 (V410) is an N-methylvaline. N-methylisoleucine occurs at positions 411 and 412. 2 positions are modified to N-methylalanine: A413 and A414. N-methylisoleucine is present on residues I415 and I416.

This sequence in the N-terminal section; belongs to the precorrin methyltransferase family. In terms of assembly, homodimer. In terms of processing, gjuMA automethylates at Ser-408, Ala-409, Val-410, Ile-411, Ile-412, Ala-413, Ala-414, Ile-415 and Ile-416 before being processed by ae prolyloligopeptidase which likely forms a peptidyl ester upon removal of the follower propeptide, which then undergoes macrocyclization with the N-terminus of the modified core peptide. Peptide backbone alpha-N-methylations change the physicochemical properties of amide bonds to provide structural constraints and other favorable characteristics including biological membrane permeability to peptides.

It participates in secondary metabolite biosynthesis. In terms of biological role, fusion protein of the methyltransferase gjuM and the type I borosin core peptide; part of the gene cluster that mediates the biosynthesis of a type I borosin, a highly methylated cyclic peptide with potent biological activities. Type I borosins derive from the C-terminus of the fusion protein, and it is the same protein that methylates its own C-terminus using S-adenosyl methionine (SAM). The C-terminus is subsequently cleaved off and macrocyclized by a prolyloligopeptidase to give the final product. The sequence is that of Methyltransferase/ribosomally synthesized type I borosin cyclic peptide precursor gjuMa from Gymnopilus junonius (Spectacular rustgill mushroom).